We begin with the raw amino-acid sequence, 279 residues long: Bifunctional protein FolD (279 aa).

Residues 164–166, S189, and I230 each bind NADP(+); that span reads GRS.

This sequence belongs to the tetrahydrofolate dehydrogenase/cyclohydrolase family. As to quaternary structure, homodimer.

It carries out the reaction (6R)-5,10-methylene-5,6,7,8-tetrahydrofolate + NADP(+) = (6R)-5,10-methenyltetrahydrofolate + NADPH. The enzyme catalyses (6R)-5,10-methenyltetrahydrofolate + H2O = (6R)-10-formyltetrahydrofolate + H(+). It functions in the pathway one-carbon metabolism; tetrahydrofolate interconversion. In terms of biological role, catalyzes the oxidation of 5,10-methylenetetrahydrofolate to 5,10-methenyltetrahydrofolate and then the hydrolysis of 5,10-methenyltetrahydrofolate to 10-formyltetrahydrofolate. In Agathobacter rectalis (strain ATCC 33656 / DSM 3377 / JCM 17463 / KCTC 5835 / VPI 0990) (Eubacterium rectale), this protein is Bifunctional protein FolD.